A 490-amino-acid polypeptide reads, in one-letter code: MALRAVWLIRHEPGTPLGGTVRFSRRYPTVEKRAKAFNGMTYVPVPEDGPFLRALLFQLRLLDDDKDFMERRDGCSRINKTSIYGLSVGGEELWPVIAFLRDSMIYASVPLVEQALSPRPPLISISGVSQGLELLLGIQDFLYSSQKNDTDLHTKLSQLPDLLLQACPLGTLLDANLQNSLNSINSVSVTQPQKQPAWKVGAYKGKAQISISITETVKCMQYGKQDIADTWQVAGTVACKCDLEGVMPAVTISLSLPTNGSPLQDIIVHPCVTSLDSAILTSSSIDTMDDSAFSGPYKFPFTPPLESFNLCHYTSQVPVPPILGSYHMKEEGVQLKVTVNFKLHESVRNNFEVCEAHIPFYNRGPITHLEYKASFGQLEVFREKSLLVWIIGQKFPKSMEISLSGTLTFGVKGHNKQPFDHICIGNTAYIKLNFRIADYTLTGCYADQHSVQVFASGKPKISAYRKLISSDYYIWNSKAPAPVTYASLLP.

Residues Lys-206–Asn-476 enclose the MHD domain.

The protein belongs to the adaptor complexes medium subunit family. As to quaternary structure, probably part of the adaptor protein complex 5 (AP-5) a tetramer composed of AP5B1, AP5M1, AP5S1 and AP5Z1. Widely expressed, including in small intestine and testis. In small intestine, highly expressed in cytoplasm of villi epithelial cells and internal glands. In testis, selectively expressed in maturing sperm cells (at protein level).

The protein resides in the cytoplasm. Its subcellular location is the cytosol. The protein localises to the late endosome membrane. It is found in the lysosome membrane. Functionally, as part of AP-5, a probable fifth adaptor protein complex it may be involved in endosomal transport. The sequence is that of AP-5 complex subunit mu-1 (Ap5m1) from Mus musculus (Mouse).